Reading from the N-terminus, the 356-residue chain is MYQLLLSLMFRVPPERIHHIAFTAMKLVTRFAPLRWLVAKVLVVDDPVLRSQAFGLTFPAPLGLAAGFDKDATGVDAWGPLGFGFAEVGTVTAQAQPGNPAPRLFRLPADRALINRMGFNNHGAGHAANFLRQRRVTVPIGANIGKTKIVEAVDAAADYTASAQLLGPLADFMVVNVSSPNTPGLRDLQAVESLRPILQAVLDTVSVPVLVKIAPDLSDEDVDAVADLAVELGLAGIVATNTTIRRDGLKTPDAEVAALGAGGLSGAPVADRSLEVLRRLYARVGDKMTIISVGGIETADQAWERILAGATLVQGYTGFIYGGPFWARSIHKGIAKRVRAAGFSSIAQAVGAENPR.

FMN contacts are provided by residues 66-70 (AGFDK) and Thr90. Lys70 lines the substrate pocket. Substrate is bound at residue 115-119 (NRMGF). Residues Asn143 and Asn176 each contribute to the FMN site. Asn176 provides a ligand contact to substrate. Catalysis depends on Ser179, which acts as the Nucleophile. Asn181 serves as a coordination point for substrate. FMN-binding residues include Lys212 and Thr240. Position 241–242 (241–242 (NT)) interacts with substrate. FMN contacts are provided by residues Gly266, Gly295, and 316–317 (YT).

This sequence belongs to the dihydroorotate dehydrogenase family. Type 2 subfamily. In terms of assembly, monomer. FMN is required as a cofactor.

Its subcellular location is the cell membrane. The catalysed reaction is (S)-dihydroorotate + a quinone = orotate + a quinol. The protein operates within pyrimidine metabolism; UMP biosynthesis via de novo pathway; orotate from (S)-dihydroorotate (quinone route): step 1/1. In terms of biological role, catalyzes the conversion of dihydroorotate to orotate with quinone as electron acceptor. This chain is Dihydroorotate dehydrogenase (quinone), found in Rhodococcus erythropolis (strain PR4 / NBRC 100887).